A 246-amino-acid chain; its full sequence is Pyridoxine 5'-phosphate synthase (246 aa).

N7 provides a ligand contact to 3-amino-2-oxopropyl phosphate. A 1-deoxy-D-xylulose 5-phosphate-binding site is contributed by 9-10 (DH). R18 is a 3-amino-2-oxopropyl phosphate binding site. H43 (proton acceptor) is an active-site residue. R45 and H50 together coordinate 1-deoxy-D-xylulose 5-phosphate. The active-site Proton acceptor is E70. T100 contributes to the 1-deoxy-D-xylulose 5-phosphate binding site. H190 acts as the Proton donor in catalysis. 3-amino-2-oxopropyl phosphate is bound by residues G191 and 212-213 (GH).

Belongs to the PNP synthase family. In terms of assembly, homooctamer; tetramer of dimers.

It localises to the cytoplasm. It carries out the reaction 3-amino-2-oxopropyl phosphate + 1-deoxy-D-xylulose 5-phosphate = pyridoxine 5'-phosphate + phosphate + 2 H2O + H(+). Its pathway is cofactor biosynthesis; pyridoxine 5'-phosphate biosynthesis; pyridoxine 5'-phosphate from D-erythrose 4-phosphate: step 5/5. Catalyzes the complicated ring closure reaction between the two acyclic compounds 1-deoxy-D-xylulose-5-phosphate (DXP) and 3-amino-2-oxopropyl phosphate (1-amino-acetone-3-phosphate or AAP) to form pyridoxine 5'-phosphate (PNP) and inorganic phosphate. The polypeptide is Pyridoxine 5'-phosphate synthase (Bordetella petrii (strain ATCC BAA-461 / DSM 12804 / CCUG 43448)).